We begin with the raw amino-acid sequence, 1080 residues long: uncharacterized protein (1080 aa).

A signal peptide spans 1–17 (MHKLLVIIAHIIVCAYA). The Extracellular segment spans residues 18 to 1042 (DFTGFDNEAG…KSLDLEMIGK (1025 aa)). N-linked (GlcNAc...) asparagine; by host glycans are attached at residues Asn439, Asn664, and Asn875. Residues 1043-1063 (IILLIAFVIVFVILLTIGIIT) traverse the membrane as a helical segment. The Cytoplasmic portion of the chain corresponds to 1064–1080 (LVKRHRETLPEDEYLLP).

It is found in the host membrane. This is an uncharacterized protein from Ostreid herpesvirus 1 (isolate France) (OsHV-1).